Consider the following 193-residue polypeptide: Holliday junction branch migration complex subunit RuvA (193 aa).

A domain I region spans residues 1-63 (MIGKLTGTVT…ENINKLYGFE (63 aa)). The segment at 64–148 (CRKSQEVARM…GIASSTNVHI (85 aa)) is domain II. A flexible linker region spans residues 149 to 150 (AS). Residues 150–193 (SEAVSALVKLGFQHKPSHKVVMEIMTKRPAIEIAELITLALKML) are domain III.

The protein belongs to the RuvA family. Homotetramer. Forms an RuvA(8)-RuvB(12)-Holliday junction (HJ) complex. HJ DNA is sandwiched between 2 RuvA tetramers; dsDNA enters through RuvA and exits via RuvB. An RuvB hexamer assembles on each DNA strand where it exits the tetramer. Each RuvB hexamer is contacted by two RuvA subunits (via domain III) on 2 adjacent RuvB subunits; this complex drives branch migration. In the full resolvosome a probable DNA-RuvA(4)-RuvB(12)-RuvC(2) complex forms which resolves the HJ.

It localises to the cytoplasm. Its function is as follows. The RuvA-RuvB-RuvC complex processes Holliday junction (HJ) DNA during genetic recombination and DNA repair, while the RuvA-RuvB complex plays an important role in the rescue of blocked DNA replication forks via replication fork reversal (RFR). RuvA specifically binds to HJ cruciform DNA, conferring on it an open structure. The RuvB hexamer acts as an ATP-dependent pump, pulling dsDNA into and through the RuvAB complex. HJ branch migration allows RuvC to scan DNA until it finds its consensus sequence, where it cleaves and resolves the cruciform DNA. This chain is Holliday junction branch migration complex subunit RuvA, found in Neorickettsia sennetsu (strain ATCC VR-367 / Miyayama) (Ehrlichia sennetsu).